The chain runs to 165 residues: Large ribosomal subunit protein uL10 (165 aa).

Belongs to the universal ribosomal protein uL10 family. As to quaternary structure, part of the ribosomal stalk of the 50S ribosomal subunit. The N-terminus interacts with L11 and the large rRNA to form the base of the stalk. The C-terminus forms an elongated spine to which L12 dimers bind in a sequential fashion forming a multimeric L10(L12)X complex.

Its function is as follows. Forms part of the ribosomal stalk, playing a central role in the interaction of the ribosome with GTP-bound translation factors. The chain is Large ribosomal subunit protein uL10 from Pectobacterium carotovorum subsp. carotovorum (strain PC1).